The chain runs to 334 residues: N-acetyl-gamma-glutamyl-phosphate reductase (334 aa).

Cys-154 is a catalytic residue.

Belongs to the NAGSA dehydrogenase family. Type 1 subfamily.

The protein resides in the cytoplasm. The catalysed reaction is N-acetyl-L-glutamate 5-semialdehyde + phosphate + NADP(+) = N-acetyl-L-glutamyl 5-phosphate + NADPH + H(+). The protein operates within amino-acid biosynthesis; L-arginine biosynthesis; N(2)-acetyl-L-ornithine from L-glutamate: step 3/4. Functionally, catalyzes the NADPH-dependent reduction of N-acetyl-5-glutamyl phosphate to yield N-acetyl-L-glutamate 5-semialdehyde. This Salmonella typhi protein is N-acetyl-gamma-glutamyl-phosphate reductase.